A 204-amino-acid chain; its full sequence is Protein OPG030 (204 aa).

The 83-residue stretch at 95-177 folds into the BACK domain; that stretch reads FLRQYINNNI…ITYSELTNAI (83 aa).

This sequence belongs to the orthopoxvirus OPG030 family.

This Bos taurus (Bovine) protein is Protein OPG030 (OPG30).